Here is a 452-residue protein sequence, read N- to C-terminus: Probable multidrug resistance protein NorM (452 aa).

12 consecutive transmembrane segments (helical) span residues 14–34 (LLHI…ITFL), 56–76 (LWTP…PIVA), 97–117 (VAAL…DLIL), 129–149 (IAKH…VYTV), 164–184 (MMIT…FIFG), 195–215 (GAGL…FFII), 244–264 (IGLP…AVTL), 284–304 (ASLL…VVGF), 319–339 (LIGI…ILLF), 360–380 (FLIY…IQGA), 392–412 (AAAF…VGTF), and 417–437 (AFGY…GLFF).

The protein belongs to the multi antimicrobial extrusion (MATE) (TC 2.A.66.1) family.

The protein resides in the cell membrane. Its function is as follows. Multidrug efflux pump. The protein is Probable multidrug resistance protein NorM (norM) of Bacillus subtilis (strain 168).